We begin with the raw amino-acid sequence, 619 residues long: Dihydroxy-acid dehydratase (619 aa).

Residue aspartate 81 participates in Mg(2+) binding. Position 122 (cysteine 122) interacts with [2Fe-2S] cluster. Aspartate 123 and lysine 124 together coordinate Mg(2+). Lysine 124 bears the N6-carboxylysine mark. Cysteine 195 serves as a coordination point for [2Fe-2S] cluster. Position 494 (glutamate 494) interacts with Mg(2+). The active-site Proton acceptor is serine 520.

This sequence belongs to the IlvD/Edd family. In terms of assembly, homodimer. The cofactor is [2Fe-2S] cluster. It depends on Mg(2+) as a cofactor.

The enzyme catalyses (2R)-2,3-dihydroxy-3-methylbutanoate = 3-methyl-2-oxobutanoate + H2O. The catalysed reaction is (2R,3R)-2,3-dihydroxy-3-methylpentanoate = (S)-3-methyl-2-oxopentanoate + H2O. The protein operates within amino-acid biosynthesis; L-isoleucine biosynthesis; L-isoleucine from 2-oxobutanoate: step 3/4. It functions in the pathway amino-acid biosynthesis; L-valine biosynthesis; L-valine from pyruvate: step 3/4. Functionally, functions in the biosynthesis of branched-chain amino acids. Catalyzes the dehydration of (2R,3R)-2,3-dihydroxy-3-methylpentanoate (2,3-dihydroxy-3-methylvalerate) into 2-oxo-3-methylpentanoate (2-oxo-3-methylvalerate) and of (2R)-2,3-dihydroxy-3-methylbutanoate (2,3-dihydroxyisovalerate) into 2-oxo-3-methylbutanoate (2-oxoisovalerate), the penultimate precursor to L-isoleucine and L-valine, respectively. The chain is Dihydroxy-acid dehydratase from Shewanella putrefaciens (strain CN-32 / ATCC BAA-453).